A 236-amino-acid chain; its full sequence is CO-responsive transcriptional regulator RcoM (236 aa).

The PAS domain maps to 1-64; that stretch reads MDDFAYNLRR…PLRPKVAVLL (64 aa). A heme-binding site is contributed by His52. The HTH LytTR-type domain occupies 131–236; it reads VPLGLGETTE…VTRLRGLLAI (106 aa).

It depends on heme as a cofactor.

Activates the expression of the CowN protein in response to carbon monoxide (CO). Is required to sustain N(2)-dependent growth in the presence of low levels of carbon monoxide (CO). This Rhodospirillum rubrum (strain ATCC 11170 / ATH 1.1.1 / DSM 467 / LMG 4362 / NCIMB 8255 / S1) protein is CO-responsive transcriptional regulator RcoM (rcoM).